Here is a 70-residue protein sequence, read N- to C-terminus: UPF0352 protein Sden_2336 (70 aa).

Belongs to the UPF0352 family.

This chain is UPF0352 protein Sden_2336, found in Shewanella denitrificans (strain OS217 / ATCC BAA-1090 / DSM 15013).